Consider the following 146-residue polypeptide: MNSMFRFWIPKTSISMQLRMLSTQTRQALEQAVKEDPIVLFMKGTPTRPMCGFSLKAIQILSLENVASDKLVTYNVLSNDELREGIKEFSDWPTIPQLYINGEFVGGSDILASMHKSGELHKILKEINALAPEQPKDSEEETTKKD.

The 106-residue stretch at Arg26–Ala131 folds into the Glutaredoxin domain. Lys43 is a glutathione binding site. Cys51 is a binding site for [2Fe-2S] cluster. Glutathione contacts are provided by residues Arg83–Lys87, Ile95, and Ser108–Asp109.

It belongs to the glutaredoxin family. Monothiol subfamily. As to quaternary structure, homodimer. Interacts with ISA1 and ISA2.

The protein resides in the mitochondrion. Monothiol glutaredoxin involved in mitochondrial iron-sulfur (Fe/S) cluster transfer. Receives 2Fe/2S clusters from scaffold protein isu1 and mediates their transfer to apoproteins, to the 4Fe/FS cluster biosynthesis machinery, or export from mitochondrion. This chain is Monothiol glutaredoxin-5, mitochondrial, found in Schizosaccharomyces pombe (strain 972 / ATCC 24843) (Fission yeast).